Here is a 101-residue protein sequence, read N- to C-terminus: Small ribosomal subunit protein uS14 (101 aa).

This sequence belongs to the universal ribosomal protein uS14 family. As to quaternary structure, part of the 30S ribosomal subunit. Contacts proteins S3 and S10.

In terms of biological role, binds 16S rRNA, required for the assembly of 30S particles and may also be responsible for determining the conformation of the 16S rRNA at the A site. The chain is Small ribosomal subunit protein uS14 from Escherichia coli O139:H28 (strain E24377A / ETEC).